Here is a 293-residue protein sequence, read N- to C-terminus: Exosome complex component RRP4 (293 aa).

Residues 1–20 (MALEMRLPKARKPLSESLGR) form a disordered region. Residues 79 to 159 (EVGDIVVGRI…SDGAVSLHTR (81 aa)) enclose the S1 motif domain. A Phosphoserine modification is found at Ser124.

Belongs to the RRP4 family. As to quaternary structure, component of the RNA exosome core complex (Exo-9), composed of EXOSC1, EXOSC2, EXOSC3, EXOSC4, EXOSC5, EXOSC6, EXOSC7, EXOSC8 and EXOSC9; within the complex interacts with EXOSC4 and EXOSC7. The catalytically inactive RNA exosome core complex (Exo-9) associates with the catalytic subunit EXOSC10/RRP6. Exo-9 may associate with DIS3 to form the nucleolar exosome complex, or DIS3L to form the cytoplasmic exosome complex. Exo-9 is formed by a hexameric base ring consisting of the heterodimers EXOSC4-EXOSC9, EXOSC5-EXOSC8 and EXOSC6-EXOSC7, and a cap ring consisting of EXOSC1, EXOSC2 and EXOSC3. The RNA exosome complex associates with cofactors C1D/RRP47, MPHOSPH6/MPP6 and MTREX/MTR4. Interacts with GTPBP1. Interacts with ZFP36L1 (via N-terminus).

It is found in the cytoplasm. The protein localises to the nucleus. The protein resides in the nucleolus. Non-catalytic component of the RNA exosome complex which has 3'-&gt;5' exoribonuclease activity and participates in a multitude of cellular RNA processing and degradation events. In the nucleus, the RNA exosome complex is involved in proper maturation of stable RNA species such as rRNA, snRNA and snoRNA, in the elimination of RNA processing by-products and non-coding 'pervasive' transcripts, such as antisense RNA species and promoter-upstream transcripts (PROMPTs), and of mRNAs with processing defects, thereby limiting or excluding their export to the cytoplasm. The RNA exosome may be involved in Ig class switch recombination (CSR) and/or Ig variable region somatic hypermutation (SHM) by targeting AICDA deamination activity to transcribed dsDNA substrates. In the cytoplasm, the RNA exosome complex is involved in general mRNA turnover and specifically degrades inherently unstable mRNAs containing AU-rich elements (AREs) within their 3' untranslated regions, and in RNA surveillance pathways, preventing translation of aberrant mRNAs. It seems to be involved in degradation of histone mRNA. The catalytic inactive RNA exosome core complex of 9 subunits (Exo-9) is proposed to play a pivotal role in the binding and presentation of RNA for ribonucleolysis, and to serve as a scaffold for the association with catalytic subunits and accessory proteins or complexes. EXOSC2 as peripheral part of the Exo-9 complex stabilizes the hexameric ring of RNase PH-domain subunits through contacts with EXOSC4 and EXOSC7. In Mus musculus (Mouse), this protein is Exosome complex component RRP4 (Exosc2).